The following is a 764-amino-acid chain: Molybdenum cofactor sulfurase 1 (764 aa).

Lys228 is subject to N6-(pyridoxal phosphate)lysine. The active site involves Cys394. The region spanning 607 to 762 is the MOSC domain; sequence LRLLKQSDEE…LYCNSVVEGL (156 aa).

This sequence belongs to the class-V pyridoxal-phosphate-dependent aminotransferase family. MOCOS subfamily. Pyridoxal 5'-phosphate serves as cofactor.

The catalysed reaction is Mo-molybdopterin + L-cysteine + AH2 = thio-Mo-molybdopterin + L-alanine + A + H2O. Its function is as follows. Sulfurates the molybdenum cofactor. Sulfation of molybdenum is essential for xanthine dehydrogenase (XDH) and aldehyde oxidase (ADO) enzymes in which molybdenum cofactor is liganded by 1 oxygen and 1 sulfur atom in active form. In Aedes aegypti (Yellowfever mosquito), this protein is Molybdenum cofactor sulfurase 1.